A 678-amino-acid polypeptide reads, in one-letter code: Probable N-methylproline demethylase (678 aa).

FMN is bound by residues Gly59, Gln102, Arg220, Lys299, and 321 to 322 (TR). Positions 345, 351, and 363 each coordinate [4Fe-4S] cluster. Positions 396, 415, 423, 433, and 460 each coordinate FAD.

In the N-terminal section; belongs to the NADH:flavin oxidoreductase/NADH oxidase family. FMN is required as a cofactor. FAD serves as cofactor. It depends on [4Fe-4S] cluster as a cofactor.

It carries out the reaction N-methyl-L-proline + NAD(+) + H2O = L-proline + formaldehyde + NADH + H(+). The protein operates within amine and polyamine degradation; stachydrine degradation. Possible NADH-dependent oxidase, may function as a demethylase that converts N-methylproline to proline. This chain is Probable N-methylproline demethylase, found in Rhizobium meliloti (strain 1021) (Ensifer meliloti).